The sequence spans 237 residues: MKDINLIEVEKLIGIEFENKGVLITALTHSSYANQFKDVKYNERLEFLGDSVLQLCVTKYLFNNYKDKSEGELTKIRALVVCENSLHKVSKNLSLGKYIRMSKGEELTGGRERTSIQADALEAVIAAVYLDKGIEVANDFILRNFKDVIDKAINEEIILDFKTRLQEVLQKNGEVNIVYNLVKHEGPPHRRKFFTDLLINNEIMGQGVGFSKKESEQNAAKAALQRLGEIKWEKDTI.

Positions leucine 6–glycine 133 constitute an RNase III domain. Glutamate 46 provides a ligand contact to Mg(2+). Residue aspartate 50 is part of the active site. Mg(2+) contacts are provided by aspartate 119 and glutamate 122. Residue glutamate 122 is part of the active site. A DRBM domain is found at aspartate 160–glutamate 229.

This sequence belongs to the ribonuclease III family. Homodimer. The cofactor is Mg(2+).

The protein resides in the cytoplasm. It carries out the reaction Endonucleolytic cleavage to 5'-phosphomonoester.. Its function is as follows. Digests double-stranded RNA. Involved in the processing of primary rRNA transcript to yield the immediate precursors to the large and small rRNAs (23S and 16S). Processes some mRNAs, and tRNAs when they are encoded in the rRNA operon. Processes pre-crRNA and tracrRNA of type II CRISPR loci if present in the organism. The sequence is that of Ribonuclease 3 from Clostridium perfringens (strain 13 / Type A).